Here is a 230-residue protein sequence, read N- to C-terminus: LexA repressor (230 aa).

Positions 1–21 (MSDDSSETRTGGRRGADAGLT) are disordered. The H-T-H motif DNA-binding region spans 44 to 64 (IREIGDAVGLTSTSSVAHQLR). Active-site for autocatalytic cleavage activity residues include S154 and K191.

This sequence belongs to the peptidase S24 family. Homodimer.

The enzyme catalyses Hydrolysis of Ala-|-Gly bond in repressor LexA.. Represses a number of genes involved in the response to DNA damage (SOS response), including recA and lexA. In the presence of single-stranded DNA, RecA interacts with LexA causing an autocatalytic cleavage which disrupts the DNA-binding part of LexA, leading to derepression of the SOS regulon and eventually DNA repair. This chain is LexA repressor, found in Mycobacterium sp. (strain JLS).